Reading from the N-terminus, the 577-residue chain is Sensor protein ChvG (577 aa).

The Cytoplasmic segment spans residues 1-29; sequence MRGQRRWAHPFTLIRRLFGNAVFSSLTRR. Residues 30-50 form a helical membrane-spanning segment; the sequence is IVFFNLVALVVLVGGIMYLNQ. Residues 51–260 are Periplasmic-facing; sequence FREGLIDARV…DIDKIVHAER (210 aa). Residues 261-281 form a helical membrane-spanning segment; it reads LAIIRVFGVAALVNVILSLLL. Residues 282–577 lie on the Cytoplasmic side of the membrane; it reads SSTIANPLRR…VLSLPAGPHP (296 aa). In terms of domain architecture, HAMP spans 283–339; it reads STIANPLRRLSAAAIRVRRGGAKEREEIPDFSSRQDEIGNLSVALREMTTALYDRIA. In terms of domain architecture, Histidine kinase spans 347 to 575; the sequence is DVSHELKNPL…RFVLSLPAGP (229 aa). H350 is subject to Phosphohistidine.

In terms of assembly, homodimer.

It localises to the cell inner membrane. It carries out the reaction ATP + protein L-histidine = ADP + protein N-phospho-L-histidine.. It participates in glycan metabolism; exopolysaccharide biosynthesis. Functionally, member of a two-component regulatory system ChvG(ExoS)/ChvI involved in regulating the production of succinoglycan. Activates ChvI by phosphorylation. The sequence is that of Sensor protein ChvG (chvG) from Rhizobium meliloti (strain 1021) (Ensifer meliloti).